The primary structure comprises 259 residues: Sugar fermentation stimulation protein homolog (259 aa).

The protein belongs to the SfsA family.

The sequence is that of Sugar fermentation stimulation protein homolog from Chloroflexus aurantiacus (strain ATCC 29364 / DSM 637 / Y-400-fl).